Reading from the N-terminus, the 254-residue chain is MQLEELINQHYSKLNDNDFHILKYILNHKHTCYHLGIDALAKACSVSRSSILRLAQKLGFSGYSEFRVFLKWEDQPEEGESMSFEKLLDDIEANLKFLRTKDMTDMCQLIDAADRIFVYGSGNAQKICARDLQRMFIPRHRYLILIEDTNEFNLMRDDFKVNDLFIIISLSGETPELIPQARMLSAKGIPFISITNLKNNVLAQLTPHNLYATSKPVTLSDRTEIVAFAPFFLVGEALFRAYVDYKEAEKNDNE.

The region spanning 1–77 (MQLEELINQH…VFLKWEDQPE (77 aa)) is the HTH rpiR-type domain. The segment at residues 37–56 (IDALAKACSVSRSSILRLAQ) is a DNA-binding region (H-T-H motif). In terms of domain architecture, SIS spans 106-248 (MCQLIDAADR…FRAYVDYKEA (143 aa)).

Functionally, positive regulator of the glv operon expression, which consists of GlvA, GlvR and GlvC. This is HTH-type transcriptional regulator GlvR (glvR) from Bacillus subtilis (strain 168).